We begin with the raw amino-acid sequence, 261 residues long: Antiviral protein S (261 aa).

2 cysteine pairs are disulfide-bonded: Cys34-Cys258 and Cys84-Cys105. Residue Glu175 is part of the active site.

Belongs to the ribosome-inactivating protein family. Type 1 RIP subfamily.

It catalyses the reaction Endohydrolysis of the N-glycosidic bond at one specific adenosine on the 28S rRNA.. In terms of biological role, inhibits viral infection of plants, and protein synthesis in vitro. The polypeptide is Antiviral protein S (Phytolacca americana (American pokeweed)).